An 83-amino-acid chain; its full sequence is Exodeoxyribonuclease 7 small subunit (83 aa).

The protein belongs to the XseB family. As to quaternary structure, heterooligomer composed of large and small subunits.

It localises to the cytoplasm. The enzyme catalyses Exonucleolytic cleavage in either 5'- to 3'- or 3'- to 5'-direction to yield nucleoside 5'-phosphates.. Functionally, bidirectionally degrades single-stranded DNA into large acid-insoluble oligonucleotides, which are then degraded further into small acid-soluble oligonucleotides. The protein is Exodeoxyribonuclease 7 small subunit of Bradyrhizobium sp. (strain ORS 278).